The primary structure comprises 721 residues: Translation initiation factor eIF2B subunit epsilon (721 aa).

Low complexity predominate over residues Met1–Val13. The segment at Met1 to Pro40 is disordered. Residue Ala2 is modified to N-acetylalanine. The residue at position 19 (Arg19) is an Omega-N-methylarginine. Residues Ala22–Arg33 are compositionally biased toward gly residues. At Ser27 the chain carries Phosphoserine. Glycyl lysine isopeptide (Lys-Gly) (interchain with G-Cter in ubiquitin) cross-links involve residues Lys61 and Lys103. Ser130 carries the phosphoserine modification. Glycyl lysine isopeptide (Lys-Gly) (interchain with G-Cter in ubiquitin) cross-links involve residues Lys141 and Lys217. Thr322 carries the post-translational modification Phosphothreonine. 2 disordered regions span residues Pro444 to Tyr483 and Glu523 to Met547. Ser450, Ser466, Ser469, Ser532, and Ser540 each carry phosphoserine. Composition is skewed to acidic residues over residues Ala456–Ala471 and Glu523–Glu537. Positions Gly543–Asp720 constitute a W2 domain. Ser544 carries the post-translational modification Phosphoserine; by DYRK2. Position 717 is a phosphoserine (Ser717).

Belongs to the eIF-2B gamma/epsilon subunits family. Component of the translation initiation factor 2B (eIF2B) complex which is a heterodecamer of two sets of five different subunits: alpha, beta, gamma, delta and epsilon. Subunits alpha, beta and delta comprise a regulatory subcomplex and subunits epsilon and gamma comprise a catalytic subcomplex. Within the complex, the hexameric regulatory complex resides at the center, with the two heterodimeric catalytic subcomplexes bound on opposite sides. Phosphorylated at Ser-544 by DYRK2; this is required for subsequent phosphorylation by GSK3B. Phosphorylated on serine and threonine residues by GSK3B; phosphorylation inhibits its function. In terms of processing, polyubiquitinated, probably by NEDD4.

The protein localises to the cytoplasm. It is found in the cytosol. Activated by the chemical integrated stress response (ISR) inhibitor ISRIB which stimulates guanine nucleotide exchange factor activity for both phosphorylated and unphosphorylated eIF2. Acts as a component of the translation initiation factor 2B (eIF2B) complex, which catalyzes the exchange of GDP for GTP on eukaryotic initiation factor 2 (eIF2) gamma subunit. Its guanine nucleotide exchange factor activity is repressed when bound to eIF2 complex phosphorylated on the alpha subunit, thereby limiting the amount of methionyl-initiator methionine tRNA available to the ribosome and consequently global translation is repressed. This is Translation initiation factor eIF2B subunit epsilon (EIF2B5) from Homo sapiens (Human).